Reading from the N-terminus, the 292-residue chain is NAD kinase (292 aa).

Residue Asp74 is the Proton acceptor of the active site. Residues 74-75 (DG), 147-148 (NE), Asp177, and 188-193 (TGYSLS) contribute to the NAD(+) site.

It belongs to the NAD kinase family. It depends on a divalent metal cation as a cofactor.

The protein resides in the cytoplasm. It catalyses the reaction NAD(+) + ATP = ADP + NADP(+) + H(+). Functionally, involved in the regulation of the intracellular balance of NAD and NADP, and is a key enzyme in the biosynthesis of NADP. Catalyzes specifically the phosphorylation on 2'-hydroxyl of the adenosine moiety of NAD to yield NADP. The sequence is that of NAD kinase from Cytophaga hutchinsonii (strain ATCC 33406 / DSM 1761 / CIP 103989 / NBRC 15051 / NCIMB 9469 / D465).